The chain runs to 182 residues: Crossover junction endodeoxyribonuclease RuvC (182 aa).

Catalysis depends on residues D7, E69, and D141. Positions 7, 69, and 141 each coordinate Mg(2+).

The protein belongs to the RuvC family. As to quaternary structure, homodimer which binds Holliday junction (HJ) DNA. The HJ becomes 2-fold symmetrical on binding to RuvC with unstacked arms; it has a different conformation from HJ DNA in complex with RuvA. In the full resolvosome a probable DNA-RuvA(4)-RuvB(12)-RuvC(2) complex forms which resolves the HJ. The cofactor is Mg(2+).

The protein resides in the cytoplasm. The catalysed reaction is Endonucleolytic cleavage at a junction such as a reciprocal single-stranded crossover between two homologous DNA duplexes (Holliday junction).. The RuvA-RuvB-RuvC complex processes Holliday junction (HJ) DNA during genetic recombination and DNA repair. Endonuclease that resolves HJ intermediates. Cleaves cruciform DNA by making single-stranded nicks across the HJ at symmetrical positions within the homologous arms, yielding a 5'-phosphate and a 3'-hydroxyl group; requires a central core of homology in the junction. The consensus cleavage sequence is 5'-(A/T)TT(C/G)-3'. Cleavage occurs on the 3'-side of the TT dinucleotide at the point of strand exchange. HJ branch migration catalyzed by RuvA-RuvB allows RuvC to scan DNA until it finds its consensus sequence, where it cleaves and resolves the cruciform DNA. This is Crossover junction endodeoxyribonuclease RuvC from Delftia acidovorans (strain DSM 14801 / SPH-1).